We begin with the raw amino-acid sequence, 248 residues long: MKVNLGNCFCLSLSQKKFPLPLASLLVNVPLALMVALGMNLALERPGVTGEMVVLESPIAPEAIFAQGVKAGEAGNYAEAVELFSVVLNLSPDSPETHYNRGLAWERLGNVDQAIADYGRSIALDRYYIPPYINRGNLYSQQQDHHTAIQDFTQAITYDPNRYKAYYNRANSYFQLGQYAQAIADYNRVLVLRPDYINAIYNRGLAHFQAGQLDSSRQDLLFSAQAYLNRGDRRSYLEALDQMSELGL.

4 TPR repeats span residues 61 to 94 (PEAI…SPDS), 95 to 128 (PETH…DRYY), 129 to 162 (IPPY…DPNR), and 163 to 196 (YKAY…RPDY).

This Synechocystis sp. (strain ATCC 27184 / PCC 6803 / Kazusa) protein is TPR repeat-containing protein slr0751.